The chain runs to 210 residues: 7-carboxy-7-deazaguanine synthase (210 aa).

Residues 12 to 14 (LQG) and arginine 27 each bind substrate. Residues 18–210 (QAGRAAVFCR…LQTHKYIGIP (193 aa)) form the Radical SAM core domain. [4Fe-4S] cluster-binding residues include cysteine 31, cysteine 46, and cysteine 49. Threonine 51 provides a ligand contact to Mg(2+). Threonine 90 contributes to the substrate binding site. S-adenosyl-L-methionine is bound by residues glycine 92, 133 to 135 (SPK), and 173 to 176 (QPMD). Residue proline 210 participates in substrate binding.

Belongs to the radical SAM superfamily. 7-carboxy-7-deazaguanine synthase family. As to quaternary structure, homodimer. It depends on [4Fe-4S] cluster as a cofactor. S-adenosyl-L-methionine serves as cofactor. The cofactor is Mg(2+).

It carries out the reaction 6-carboxy-5,6,7,8-tetrahydropterin + H(+) = 7-carboxy-7-deazaguanine + NH4(+). It functions in the pathway purine metabolism; 7-cyano-7-deazaguanine biosynthesis. Catalyzes the complex heterocyclic radical-mediated conversion of 6-carboxy-5,6,7,8-tetrahydropterin (CPH4) to 7-carboxy-7-deazaguanine (CDG), a step common to the biosynthetic pathways of all 7-deazapurine-containing compounds. This is 7-carboxy-7-deazaguanine synthase from Bordetella pertussis (strain Tohama I / ATCC BAA-589 / NCTC 13251).